Here is a 268-residue protein sequence, read N- to C-terminus: Bis(5'-nucleosyl)-tetraphosphatase, symmetrical (268 aa).

The protein belongs to the Ap4A hydrolase family.

The catalysed reaction is P(1),P(4)-bis(5'-adenosyl) tetraphosphate + H2O = 2 ADP + 2 H(+). Functionally, hydrolyzes diadenosine 5',5'''-P1,P4-tetraphosphate to yield ADP. The sequence is that of Bis(5'-nucleosyl)-tetraphosphatase, symmetrical from Vibrio campbellii (strain ATCC BAA-1116).